Here is a 367-residue protein sequence, read N- to C-terminus: Mitogen-activated protein kinase 12 (367 aa).

The region spanning 27–311 (YQDLQPVGSG…AAEALAHPYF (285 aa)) is the Protein kinase domain. ATP contacts are provided by residues 33–41 (VGSGAYGAV) and Lys-56. Catalysis depends on Asp-153, which acts as the Proton acceptor. Residue Thr-183 is modified to Phosphothreonine; by MAP2K3 and MAP2K6. A TXY motif is present at residues 183–185 (TGY). Tyr-185 is subject to Phosphotyrosine; by MAP2K3 and MAP2K6.

This sequence belongs to the protein kinase superfamily. CMGC Ser/Thr protein kinase family. MAP kinase subfamily. Monomer. Interacts with the PDZ domain of the syntrophin SNTA1. Interacts with LIN7C, SCRIB, SYNJ2BP and SH3BP5. Interacts with PTPN4; this interaction induces the activation of PTPN4 phosphatase activity. Mg(2+) is required as a cofactor. In terms of processing, dually phosphorylated on Thr-183 and Tyr-185 by MAP2K3/MKK3 and MAP2K6/MKK6, which activates the enzyme. Post-translationally, ubiquitinated. Ubiquitination leads to degradation by the proteasome pathway. Highly expressed in skeletal muscle, lung and testes and also in the heart and thymus of both adult and neonatal rats.

It localises to the cytoplasm. The protein localises to the nucleus. Its subcellular location is the mitochondrion. It carries out the reaction L-seryl-[protein] + ATP = O-phospho-L-seryl-[protein] + ADP + H(+). The catalysed reaction is L-threonyl-[protein] + ATP = O-phospho-L-threonyl-[protein] + ADP + H(+). Activated by phosphorylation on threonine and tyrosine. MAP2K3/MKK3 and MAP2K6/MKK6 are both essential for the activation of MAPK12 induced by environmental stress, whereas MAP2K6/MKK6 is the major MAPK12 activator in response to TNF-alpha. Serine/threonine kinase which acts as an essential component of the MAP kinase signal transduction pathway. MAPK12 is one of the four p38 MAPKs which play an important role in the cascades of cellular responses evoked by extracellular stimuli such as pro-inflammatory cytokines or physical stress leading to direct activation of transcription factors such as ELK1 and ATF2. Accordingly, p38 MAPKs phosphorylate a broad range of proteins and it has been estimated that they may have approximately 200 to 300 substrates each. Some of the targets are downstream kinases such as MAPKAPK2, which are activated through phosphorylation and further phosphorylate additional targets. Plays a role in myoblast differentiation and also in the down-regulation of cyclin D1 in response to hypoxia in adrenal cells suggesting MAPK12 may inhibit cell proliferation while promoting differentiation. Phosphorylates DLG1. Following osmotic shock, MAPK12 in the cell nucleus increases its association with nuclear DLG1, thereby causing dissociation of DLG1-SFPQ complexes. This function is independent of its catalytic activity and could affect mRNA processing and/or gene transcription to aid cell adaptation to osmolarity changes in the environment. Regulates UV-induced checkpoint signaling and repair of UV-induced DNA damage and G2 arrest after gamma-radiation exposure. MAPK12 is involved in the regulation of SLC2A1 expression and basal glucose uptake in L6 myotubes; and negatively regulates SLC2A4 expression and contraction-mediated glucose uptake in adult skeletal muscle. C-Jun (JUN) phosphorylation is stimulated by MAPK14 and inhibited by MAPK12, leading to a distinct AP-1 regulation. MAPK12 is required for the normal kinetochore localization of PLK1, prevents chromosomal instability and supports mitotic cell viability. MAPK12-signaling is also positively regulating the expansion of transient amplifying myogenic precursor cells during muscle growth and regeneration. In Rattus norvegicus (Rat), this protein is Mitogen-activated protein kinase 12 (Mapk12).